The chain runs to 274 residues: Diaminopimelate epimerase (274 aa).

Substrate-binding residues include N11, Q44, and N64. Residue C73 is the Proton donor of the active site. Residues 74–75 (GN), N157, N190, and 208–209 (ER) each bind substrate. C217 functions as the Proton acceptor in the catalytic mechanism. Residue 218 to 219 (GS) participates in substrate binding.

It belongs to the diaminopimelate epimerase family. As to quaternary structure, homodimer.

It localises to the cytoplasm. The catalysed reaction is (2S,6S)-2,6-diaminopimelate = meso-2,6-diaminopimelate. The protein operates within amino-acid biosynthesis; L-lysine biosynthesis via DAP pathway; DL-2,6-diaminopimelate from LL-2,6-diaminopimelate: step 1/1. Catalyzes the stereoinversion of LL-2,6-diaminopimelate (L,L-DAP) to meso-diaminopimelate (meso-DAP), a precursor of L-lysine and an essential component of the bacterial peptidoglycan. This is Diaminopimelate epimerase from Escherichia fergusonii (strain ATCC 35469 / DSM 13698 / CCUG 18766 / IAM 14443 / JCM 21226 / LMG 7866 / NBRC 102419 / NCTC 12128 / CDC 0568-73).